The sequence spans 151 residues: FUN14 domain-containing protein 1 (151 aa).

The short motif at 14-17 is the YXXL element; it reads YEVL. The next 3 helical transmembrane spans lie at 44–64, 71–91, and 130–150; these read YSVA…GFLF, AATA…GGYI, and FIKK…LGLA.

The protein belongs to the FUN14 family.

The protein localises to the mitochondrion outer membrane. In terms of biological role, acts as an activator of hypoxia-induced mitophagy, an important mechanism for mitochondrial quality control. This is FUN14 domain-containing protein 1 (fundc1) from Xenopus tropicalis (Western clawed frog).